The chain runs to 217 residues: Uracil-DNA glycosylase (217 aa).

Catalysis depends on D62, which acts as the Proton acceptor.

It belongs to the uracil-DNA glycosylase (UDG) superfamily. UNG family.

The protein localises to the cytoplasm. The enzyme catalyses Hydrolyzes single-stranded DNA or mismatched double-stranded DNA and polynucleotides, releasing free uracil.. Functionally, excises uracil residues from the DNA which can arise as a result of misincorporation of dUMP residues by DNA polymerase or due to deamination of cytosine. The sequence is that of Uracil-DNA glycosylase from Streptococcus uberis (strain ATCC BAA-854 / 0140J).